Consider the following 201-residue polypeptide: Small ribosomal subunit protein uS4c (201 aa).

The S4 RNA-binding domain occupies 91–153; it reads MRLDNIVFRL…NASKKIVETN (63 aa).

It belongs to the universal ribosomal protein uS4 family. As to quaternary structure, part of the 30S ribosomal subunit. Contacts protein S5. The interaction surface between S4 and S5 is involved in control of translational fidelity.

The protein localises to the plastid. It is found in the cyanelle. Functionally, one of the primary rRNA binding proteins, it binds directly to 16S rRNA where it nucleates assembly of the body of the 30S subunit. In terms of biological role, with S5 and S12 plays an important role in translational accuracy. In Cyanophora paradoxa, this protein is Small ribosomal subunit protein uS4c (rps4).